We begin with the raw amino-acid sequence, 437 residues long: GTPase Der (437 aa).

2 consecutive EngA-type G domains span residues 3 to 168 and 178 to 353; these read PLIA…PVQE and TNLA…ENRS. Residues 9–16, 56–60, 120–123, 184–191, 231–235, and 296–299 each bind GTP; these read GRPNVGKS, DTGGY, NKVE, DTAGL, and NKWD. Positions 354–437 constitute a KH-like domain; it reads RKITTSALNR…VTVSLRFFKK (84 aa).

It belongs to the TRAFAC class TrmE-Era-EngA-EngB-Septin-like GTPase superfamily. EngA (Der) GTPase family. Associates with the 50S ribosomal subunit.

GTPase that plays an essential role in the late steps of ribosome biogenesis. The polypeptide is GTPase Der (Chlorobium phaeobacteroides (strain DSM 266 / SMG 266 / 2430)).